Consider the following 283-residue polypeptide: Probable replication-associated protein repA1 (283 aa).

It belongs to the IncFII RepA family.

Its function is as follows. This protein is essential for plasmid replication; it is involved in copy control functions. This chain is Probable replication-associated protein repA1 (repA1), found in Buchnera aphidicola subsp. Schizaphis graminum (strain Sg).